We begin with the raw amino-acid sequence, 340 residues long: Dof zinc finger protein DOF2.2 (340 aa).

The disordered stretch occupies residues 12–33 (PPINWPQSANPNNHPHHHQLQE). The Dof-type zinc-finger motif lies at 94 to 148 (LKCPRCDSANTKFCYFNNYNLTQPRHFCKACRRYWTRGGALRNVPVGGGCRRNKK). Zn(2+)-binding residues include Cys96, Cys99, Cys121, and Cys124. 2 disordered regions span residues 138-180 (PVGG…TSNV) and 301-340 (GNIS…QHLM). The span at 151–165 (SGNSKSSSSSQNKQS) shows a compositional bias: low complexity. 2 stretches are compositionally biased toward polar residues: residues 166 to 180 (TSMV…TSNV) and 309 to 331 (GLTS…GSSS).

The protein resides in the nucleus. Transcription factor that binds specifically to a 5'-AA[AG]G-3' consensus core sequence. The chain is Dof zinc finger protein DOF2.2 (DOF2.2) from Arabidopsis thaliana (Mouse-ear cress).